A 631-amino-acid chain; its full sequence is Fusexin 1 (631 aa).

Positions 1 to 19 (MRRAALILAFVLFIGLSSA) are cleaved as a signal peptide. The domain I N-terminus stretch occupies residues 20–90 (TVTSADSITY…THQDSKLKYS (71 aa)). The Extracellular segment spans residues 20-537 (TVTSADSITY…NLFGGSGSGD (518 aa)). The tract at residues 91 to 170 (TSTSDELRDI…KLATPAYIDN (80 aa)) is domain II N-terminus. The Ca(2+) site is built by D112, S146, Y149, and D150. A disulfide bridge connects residues C125 and C155. The segment at 143 to 148 (SVTSPV) is fusion loop, required for fusogenic activity, not required for membrane surface localization. A domain I central section region spans residues 171–224 (PDEIFTAKAELQAGDKTIQSATLSNGDAGDGTVTDLGDSKISWNGNLDLGASEP). The interval 225-316 (ENSRVIALYS…KDSSLDTGSF (92 aa)) is domain II C-terminus. The domain I C-terminus stretch occupies residues 317-348 (VYDTPELLSYPSFTVYVDAGENGYIEVTKPTG). The domain III stretch occupies residues 349 to 455 (DPDIISTSST…SVSVTGIQQS (107 aa)). 3 disulfide bridges follow: C389–C432, C457–C477, and C490–C506. The tract at residues 443–467 (DSTSVSVTGIQQSECNPGDQRREKN) is disordered. The segment at 456 to 509 (ECNPGDQRREKNENDRWEIYTCQDNGLTYEYDVTCAEDEKAVAQGDNQFSCEKQ) is domain IV, required for fusogenic activity. The tract at residues 510-537 (DDDSGGGDNTGSDSGLFSNLFGGSGSGD) is stem. Residues 538-558 (LLTQVHTALSILAGLVAGFFG) traverse the membrane as a helical segment. The Cytoplasmic portion of the chain corresponds to 559–590 (YRGARWIHGETDIKGGFKLESRNVSRVKRGSP). The chain crosses the membrane as a helical span at residues 591-611 (VAGIVGAVLGFVVGYGVASVF). A topological domain (extracellular) is located at residue H612. A helical membrane pass occupies residues 613 to 630 (PVVQIIVVLGIAVGLYYF). A topological domain (cytoplasmic) is located at residue R631.

The protein belongs to the HAP2/GCS1 family. Fusexin 1 subfamily. In terms of assembly, monomer in solution, crystallizes as a trimer in high salt (2.5 M NaCl, 0.2 M CaCl(2)). The trimer is stabilized by interdomain contacts and numerous Ca(2+) and Na(+) ions.

Its subcellular location is the cell surface. It is found in the cell membrane. Its function is as follows. Exhibits fusogenic activity. Mediates cell-cell fusion in mammalian cells when present in both cells (bilateral fusion). The chain is Fusexin 1 from Uncultured archaeon.